The chain runs to 136 residues: Acyl carrier protein 2, chloroplastic (136 aa).

The transit peptide at 1-51 directs the protein to the chloroplast; sequence MASIAASASISLQARPRQLAIAASQVKSFSNGRRSSLSFNLRQLPTRLTVS. Residues 56-131 form the Carrier domain; the sequence is PETVDKVCAV…QAAALIEELL (76 aa). The residue at position 91 (Ser-91) is an O-(pantetheine 4'-phosphoryl)serine.

It belongs to the acyl carrier protein (ACP) family. Post-translationally, 4'-phosphopantetheine is transferred from CoA to a specific serine of apo-ACP by acpS. This modification is essential for activity because fatty acids are bound in thioester linkage to the sulfhydryl of the prosthetic group.

The protein localises to the plastid. It is found in the chloroplast. Its function is as follows. Carrier of the growing fatty acid chain in fatty acid biosynthesis. This Arabidopsis thaliana (Mouse-ear cress) protein is Acyl carrier protein 2, chloroplastic (ACP2).